We begin with the raw amino-acid sequence, 213 residues long: Uracil phosphoribosyltransferase (213 aa).

5-phospho-alpha-D-ribose 1-diphosphate is bound by residues R78, R103, and 130–138 (DPMLATGGT). Uracil-binding positions include I197 and 202–204 (GDA). Position 203 (D203) interacts with 5-phospho-alpha-D-ribose 1-diphosphate.

Belongs to the UPRTase family. Requires Mg(2+) as cofactor.

The catalysed reaction is UMP + diphosphate = 5-phospho-alpha-D-ribose 1-diphosphate + uracil. It functions in the pathway pyrimidine metabolism; UMP biosynthesis via salvage pathway; UMP from uracil: step 1/1. With respect to regulation, allosterically activated by GTP. Catalyzes the conversion of uracil and 5-phospho-alpha-D-ribose 1-diphosphate (PRPP) to UMP and diphosphate. This Nocardioides sp. (strain ATCC BAA-499 / JS614) protein is Uracil phosphoribosyltransferase.